A 192-amino-acid polypeptide reads, in one-letter code: DNA dC-&gt;dU-editing enzyme APOBEC-3Ca (192 aa).

The region spanning 15 to 141 (IDPNTFRFHF…PNYQEGLCKL (127 aa)) is the CMP/dCMP-type deaminase domain. Residue H69 coordinates Zn(2+). E71 serves as the catalytic Proton donor. Zn(2+)-binding residues include C100 and C103.

It belongs to the cytidine and deoxycytidylate deaminase family. As to quaternary structure, (Microbial infection) Interacts with feline foamy virus protein Bet. This interaction does not induce APOBEC3Ca degradation but prevents its dimerization and incorporation into the virion. Requires Zn(2+) as cofactor.

The protein resides in the nucleus. The protein localises to the cytoplasm. It catalyses the reaction a 2'-deoxycytidine in single-stranded DNA + H2O + H(+) = a 2'-deoxyuridine in single-stranded DNA + NH4(+). Functionally, DNA deaminase (cytidine deaminase) which acts as an inhibitor of retrovirus replication and retrotransposon mobility via deaminase-dependent and -independent mechanisms. Selectively targets single-stranded DNA and does not deaminate double-stranded DNA or single- or double-stranded RNA. Does not reduce infectivity of foamy feline virus, feline immunodeficiency virus or feline leukemia virus. This Felis catus (Cat) protein is DNA dC-&gt;dU-editing enzyme APOBEC-3Ca.